Here is a 375-residue protein sequence, read N- to C-terminus: Putative F-box only protein 11 (375 aa).

In terms of domain architecture, F-box spans 1-46 (MVSVNLPWELVEEILCRVPPQSLVKFRTVCKQWNSLFDDNKFVNDH).

The sequence is that of Putative F-box only protein 11 (FBX11) from Arabidopsis thaliana (Mouse-ear cress).